A 135-amino-acid polypeptide reads, in one-letter code: Ribosome-binding factor A (135 aa).

It belongs to the RbfA family. In terms of assembly, monomer. Binds 30S ribosomal subunits, but not 50S ribosomal subunits or 70S ribosomes.

It localises to the cytoplasm. In terms of biological role, one of several proteins that assist in the late maturation steps of the functional core of the 30S ribosomal subunit. Associates with free 30S ribosomal subunits (but not with 30S subunits that are part of 70S ribosomes or polysomes). Required for efficient processing of 16S rRNA. May interact with the 5'-terminal helix region of 16S rRNA. The polypeptide is Ribosome-binding factor A (Aliivibrio fischeri (strain MJ11) (Vibrio fischeri)).